A 364-amino-acid polypeptide reads, in one-letter code: DNA replication and repair protein RecF (364 aa).

30–37 (GENGSGKT) contributes to the ATP binding site.

It belongs to the RecF family.

It is found in the cytoplasm. The RecF protein is involved in DNA metabolism; it is required for DNA replication and normal SOS inducibility. RecF binds preferentially to single-stranded, linear DNA. It also seems to bind ATP. The chain is DNA replication and repair protein RecF from Xylella fastidiosa (strain M12).